The chain runs to 553 residues: Arginine--tRNA ligase (553 aa).

The short motif at 130 to 140 (ANPTGDLHIGH) is the 'HIGH' region element.

It belongs to the class-I aminoacyl-tRNA synthetase family. Monomer.

The protein resides in the cytoplasm. It carries out the reaction tRNA(Arg) + L-arginine + ATP = L-arginyl-tRNA(Arg) + AMP + diphosphate. In Staphylococcus aureus (strain bovine RF122 / ET3-1), this protein is Arginine--tRNA ligase.